Consider the following 354-residue polypeptide: Photosystem II protein D1 2 (354 aa).

Transmembrane regions (helical) follow at residues 29–46 (YIGWFGVLMIPTLLTATT), 118–133 (HFLIGVFCYMGREWEL), and 142–156 (WIAVAYSAPVAAATA). Chlorophyll a is bound at residue His-118. A pheophytin a-binding site is contributed by Tyr-126. Positions 170 and 189 each coordinate [CaMn4O5] cluster. Residues 197 to 218 (FHQLGVAGVFGGALFSAMHGSL) form a helical membrane-spanning segment. His-198 contributes to the chlorophyll a binding site. Residues His-215 and 264–265 (SF) contribute to the a quinone site. His-215 is a Fe cation binding site. His-272 is a Fe cation binding site. The helical transmembrane segment at 274-288 (FLAAWPVIGIWFTAL) threads the bilayer. Residues His-332, Glu-333, Asp-342, and Ala-344 each contribute to the [CaMn4O5] cluster site. Positions 345–354 (AVEVAPAVRG) are excised as a propeptide.

This sequence belongs to the reaction center PufL/M/PsbA/D family. PSII is composed of 1 copy each of membrane proteins PsbA, PsbB, PsbC, PsbD, PsbE, PsbF, PsbH, PsbI, PsbJ, PsbK, PsbL, PsbM, PsbT, PsbX, PsbY, PsbZ, Psb30/Ycf12, peripheral proteins PsbO, CyanoQ (PsbQ), PsbU, PsbV and a large number of cofactors. It forms dimeric complexes. It depends on The D1/D2 heterodimer binds P680, chlorophylls that are the primary electron donor of PSII, and subsequent electron acceptors. It shares a non-heme iron and each subunit binds pheophytin, quinone, additional chlorophylls, carotenoids and lipids. D1 provides most of the ligands for the Mn4-Ca-O5 cluster of the oxygen-evolving complex (OEC). There is also a Cl(-1) ion associated with D1 and D2, which is required for oxygen evolution. The PSII complex binds additional chlorophylls, carotenoids and specific lipids. as a cofactor. Tyr-161 forms a radical intermediate that is referred to as redox-active TyrZ, YZ or Y-Z. Post-translationally, C-terminally processed by CtpA; processing is essential to allow assembly of the oxygen-evolving complex and thus photosynthetic growth.

It is found in the cellular thylakoid membrane. The catalysed reaction is 2 a plastoquinone + 4 hnu + 2 H2O = 2 a plastoquinol + O2. Its function is as follows. Photosystem II (PSII) is a light-driven water:plastoquinone oxidoreductase that uses light energy to abstract electrons from H(2)O, generating O(2) and a proton gradient subsequently used for ATP formation. It consists of a core antenna complex that captures photons, and an electron transfer chain that converts photonic excitation into a charge separation. The D1/D2 (PsbA/PsbD) reaction center heterodimer binds P680, the primary electron donor of PSII as well as several subsequent electron acceptors. The sequence is that of Photosystem II protein D1 2 from Synechococcus sp. (strain JA-2-3B'a(2-13)) (Cyanobacteria bacterium Yellowstone B-Prime).